Consider the following 325-residue polypeptide: NADH-quinone oxidoreductase subunit H (325 aa).

The next 8 helical transmembrane spans lie at 11 to 31, 81 to 101, 114 to 134, 154 to 174, 186 to 206, 237 to 257, 265 to 285, and 304 to 324; these read ILIS…CGAF, AIFT…FAIV, IGIL…LFAG, LSYE…AGSF, VWNV…GVAV, FFVG…TLFF, LPPF…FILI, and VCLP…LYNA.

This sequence belongs to the complex I subunit 1 family. As to quaternary structure, NDH-1 is composed of 13 different subunits. Subunits NuoA, H, J, K, L, M, N constitute the membrane sector of the complex.

It is found in the cell inner membrane. It carries out the reaction a quinone + NADH + 5 H(+)(in) = a quinol + NAD(+) + 4 H(+)(out). Its function is as follows. NDH-1 shuttles electrons from NADH, via FMN and iron-sulfur (Fe-S) centers, to quinones in the respiratory chain. The immediate electron acceptor for the enzyme in this species is believed to be ubiquinone. Couples the redox reaction to proton translocation (for every two electrons transferred, four hydrogen ions are translocated across the cytoplasmic membrane), and thus conserves the redox energy in a proton gradient. This subunit may bind ubiquinone. In Yersinia enterocolitica serotype O:8 / biotype 1B (strain NCTC 13174 / 8081), this protein is NADH-quinone oxidoreductase subunit H.